Consider the following 166-residue polypeptide: Large ribosomal subunit protein uL10 (166 aa).

It belongs to the universal ribosomal protein uL10 family. Part of the ribosomal stalk of the 50S ribosomal subunit. The N-terminus interacts with L11 and the large rRNA to form the base of the stalk. The C-terminus forms an elongated spine to which L12 dimers bind in a sequential fashion forming a multimeric L10(L12)X complex.

Functionally, forms part of the ribosomal stalk, playing a central role in the interaction of the ribosome with GTP-bound translation factors. In Azotobacter vinelandii (strain DJ / ATCC BAA-1303), this protein is Large ribosomal subunit protein uL10.